We begin with the raw amino-acid sequence, 3726 residues long: Histone-lysine N-methyltransferase trithorax (3726 aa).

Disordered stretches follow at residues M1–S247, Q321–G352, N371–Q429, and A509–R624. Low complexity-rich tracts occupy residues P31–A53 and G71–S101. Residues G102–N115 show a composition bias toward gly residues. The segment covering L126–R143 has biased composition (basic and acidic residues). A compositionally biased stretch (low complexity) spans S147–G205. Residues K206–S215 are compositionally biased toward polar residues. Low complexity predominate over residues T222 to S247. 2 stretches are compositionally biased toward low complexity: residues A384–A402 and A509–N525. Over residues P553–A586 the composition is skewed to acidic residues. Positions V587–L610 are enriched in basic and acidic residues. The nuclear receptor DNA-binding region spans P759–R884. 4 disordered regions span residues T915–L937, L981–V1049, V1115–K1184, and D1208–R1231. The segment covering K918–L937 has biased composition (polar residues). Over residues S986–E1000 the composition is skewed to basic and acidic residues. A compositionally biased stretch (low complexity) spans P1031 to A1041. Residues S1123–T1132 show a composition bias toward basic and acidic residues. Low complexity-rich tracts occupy residues G1173–A1183 and T1211–Q1223. 3 consecutive PHD-type zinc fingers follow at residues R1266–C1347, Y1348–C1393, and G1421–R1482. The region spanning A1496–E1663 is the Bromo domain. Residues F1573–V1592 are disordered. The C2HC pre-PHD-type zinc finger occupies T1734 to V1774. The segment at I1795–A1842 adopts a PHD-type 4 zinc-finger fold. One can recognise an FYR N-terminal domain in the interval R1884–Q1941. 7 disordered regions span residues G1991 to Q2019, T2068 to S2110, C2283 to T2302, G2649 to T2669, S2866 to K2894, Q3029 to P3096, and R3347 to P3381. A compositionally biased stretch (low complexity) spans N2074–N2087. The segment covering S3032 to S3043 has biased composition (low complexity). Residues L3044–P3057 are compositionally biased toward polar residues. In terms of domain architecture, FYR C-terminal spans G3386–Y3470. Positions D3588 to K3704 constitute an SET domain. Positions 3598 and 3600 each coordinate S-adenosyl-L-methionine. An S-methylcysteine; by autocatalysis modification is found at C3641. S-adenosyl-L-methionine contacts are provided by residues Y3642 and N3665–H3666. The Zn(2+) site is built by C3668, C3714, C3716, and C3721. The Post-SET domain maps to E3710 to N3726.

Belongs to the class V-like SAM-binding methyltransferase superfamily. Histone-lysine methyltransferase family. TRX/MLL subfamily. As to quaternary structure, interacts (via SET domain) with ash1 (via SET domain). Interacts with Nup98. As to expression, maternal isoforms are expressed in syncytial blastoderm, confined to the ventral region fated to become mesoderm. An additional broad domain of expression arises during cellularization and is quickly resolved into four pair-rule-like stripes in the posterior half of the embryo.

The protein resides in the nucleus. It localises to the chromosome. The enzyme catalyses L-lysyl(9)-[histone H3] + 3 S-adenosyl-L-methionine = N(6),N(6),N(6)-trimethyl-L-lysyl(9)-[histone H3] + 3 S-adenosyl-L-homocysteine + 3 H(+). The catalysed reaction is L-cysteinyl-[protein] + S-adenosyl-L-methionine = S-methyl-L-cysteinyl-[protein] + S-adenosyl-L-homocysteine + H(+). Its function is as follows. Histone methyltransferase that methylates 'Lys-4' of histone H3 (H3K4me). H3K4me represents a specific tag for epigenetic transcriptional activation. Functions in segment determination through interaction with genes of bithorax (BX-C) and antennapedia (ANT-C) complexes. Acts as an activator of BX-C. Involved in the very early regulation of homeotic genes expressed only in the posterior region of the embryo. Also has auto-methylation activity on Cys-3641. This Drosophila melanogaster (Fruit fly) protein is Histone-lysine N-methyltransferase trithorax.